The chain runs to 358 residues: Mannonate dehydratase (358 aa).

This sequence belongs to the mannonate dehydratase family. It depends on Fe(2+) as a cofactor. The cofactor is Mn(2+).

It carries out the reaction D-mannonate = 2-dehydro-3-deoxy-D-gluconate + H2O. Its pathway is carbohydrate metabolism; pentose and glucuronate interconversion. Catalyzes the dehydration of D-mannonate. This Lactococcus lactis subsp. lactis (strain IL1403) (Streptococcus lactis) protein is Mannonate dehydratase.